Consider the following 377-residue polypeptide: Odorant receptor 30a (377 aa).

The Cytoplasmic segment spans residues methionine 1–arginine 34. Residues tyrosine 35–serine 55 form a helical membrane-spanning segment. The Extracellular portion of the chain corresponds to threonine 56–asparagine 65. The chain crosses the membrane as a helical span at residues valine 66–arginine 86. At phenylalanine 87–arginine 127 the chain is on the cytoplasmic side. Residues isoleucine 128–serine 148 form a helical membrane-spanning segment. The Extracellular segment spans residues glutamate 149 to glutamate 172. A helical membrane pass occupies residues isoleucine 173–threonine 193. Residues asparagine 194–histidine 254 lie on the Cytoplasmic side of the membrane. Residues leucine 255–alanine 275 traverse the membrane as a helical segment. Residues glutamine 276–glutamine 280 are Extracellular-facing. Residues threonine 281–valine 301 form a helical membrane-spanning segment. Over alanine 302 to alanine 344 the chain is Cytoplasmic. A helical membrane pass occupies residues isoleucine 345–isoleucine 365. The Extracellular portion of the chain corresponds to tyrosine 366 to glycine 377.

Belongs to the insect chemoreceptor superfamily. Heteromeric odorant receptor channel (TC 1.A.69) family. Or30a subfamily. Interacts with Orco. Complexes exist early in the endomembrane system in olfactory sensory neurons (OSNs), coupling these complexes to the conserved ciliary trafficking pathway.

It localises to the cell membrane. Odorant receptor which mediates acceptance or avoidance behavior, depending on its substrates. The odorant receptor repertoire encodes a large collection of odor stimuli that vary widely in identity, intensity, and duration. May form a complex with Orco to form odorant-sensing units, providing sensitive and prolonged odorant signaling and calcium permeability. Involved in the behavioral responses to propyl acetate and anisole. The chain is Odorant receptor 30a (Or30a) from Drosophila melanogaster (Fruit fly).